Reading from the N-terminus, the 642-residue chain is Threonine--tRNA ligase (642 aa).

Residues 1–61 (MPVIRFCDGS…TEDSSISFIS (61 aa)) enclose the TGS domain. Residues 243-534 (DHRKIGKLLN…LIEEFSGKLP (292 aa)) are catalytic. Zn(2+) contacts are provided by Cys-334, His-385, and His-511.

It belongs to the class-II aminoacyl-tRNA synthetase family. Homodimer. Requires Zn(2+) as cofactor.

It is found in the cytoplasm. The enzyme catalyses tRNA(Thr) + L-threonine + ATP = L-threonyl-tRNA(Thr) + AMP + diphosphate + H(+). In terms of biological role, catalyzes the attachment of threonine to tRNA(Thr) in a two-step reaction: L-threonine is first activated by ATP to form Thr-AMP and then transferred to the acceptor end of tRNA(Thr). Also edits incorrectly charged L-seryl-tRNA(Thr). This is Threonine--tRNA ligase from Buchnera aphidicola subsp. Schizaphis graminum (strain Sg).